A 516-amino-acid polypeptide reads, in one-letter code: Putative GTP-binding protein 6 (516 aa).

Low complexity predominate over residues 18–39; it reads GRGRSAPRAAAPSCPARALAAV. The segment at 18–82 is disordered; that stretch reads GRGRSAPRAA…PEDADENAEE (65 aa). The span at 57 to 67 shows a compositional bias: basic and acidic residues; the sequence is LRADGGRSRTG. The segment covering 68-82 has biased composition (acidic residues); the sequence is DDEEEPEDADENAEE. The Hflx-type G domain maps to 295–459; the sequence is PVISVVGYTN…ELDAAVLKAT (165 aa). GTP-binding positions include 301 to 308, 327 to 331, 349 to 352, 418 to 421, and 437 to 439; these read GYTNCGKT, FATLD, DTIG, NKVD, and SAL. Mg(2+) is bound by residues Thr-308 and Thr-329.

The protein belongs to the TRAFAC class OBG-HflX-like GTPase superfamily. HflX GTPase family. Mg(2+) serves as cofactor. Ubiquitously expressed.

In Homo sapiens (Human), this protein is Putative GTP-binding protein 6 (GTPBP6).